Consider the following 234-residue polypeptide: Viral Fc-gamma receptor-like protein IR11 (234 aa).

The first 23 residues, 1-23, serve as a signal peptide directing secretion; sequence MQTYSTPLTLVIVTSLFLFTTQG. Residues 24-122 form the Ig-like V-type domain; the sequence is SSSNAVEPTK…VKDTGVYLLQ (99 aa). Residues 24-182 are Extracellular-facing; sequence SSSNAVEPTK…DLKRQWSGLS (159 aa). Asparagine 57, asparagine 105, and asparagine 110 each carry an N-linked (GlcNAc...) asparagine; by host glycan. The helical transmembrane segment at 183–203 threads the bilayer; that stretch reads LHCAWVSGMMIFVGALVICFL. At 204–234 the chain is on the cytoplasmic side; sequence RSQRIGEQDAEHLRTDLDTEPLLLTVDGDLQ.

The protein belongs to the RL11 family.

The protein localises to the membrane. In Homo sapiens (Human), this protein is Viral Fc-gamma receptor-like protein IR11.